The chain runs to 702 residues: MSITTKTFQFGNDTVTLETGRIARQATGAVLCTIGDAQVLATVVGAKSAKAGQDFFPLSVHYQERAYAVGKIPGGFLKREGRPSEKETLTSRLIDRPIRPLFPKGFMNEVQVVCTVMSTNTNLDADIAAMLATSAALTISGIPFNGPIGAARVGFNDESGYVLNPSYSDLDGSLLDMVVAGTKDAVLMVESEAQELTEDEMLGAVLYAHKEMQAAISAITEFAAECAKPRWDWEAEAANVSLADALQSGYAAQIEEAYGISEKMARYAQLGVVRDAAVAALVTEEGEFTEADVTGAFSKLEKRIVRRRVIDGKPRIDGRDNKTVRPINVEVGLLSKTHGSALFTRGETQAIATCTLGTSRDSQMTDGLTGESKDSFMLHYNFPPYSVGECGRMGGVGRREIGHGRLARRGVQAVLPSEDEFPYTIRVVSEITESNGSSSMASVCGASLSMMDAGVPLKAPVAGIAMGLIKEDDGFAVLTDILGDEDHLGDMDFKVAGTAEGITALQMDIKIEGINEEIMDIALSQALEARTHILREMAKVIGYARPEVSPNAPSMATIKIDPEKIRDVIGKGGATIRSITEQTGASIDLDDDGTVRIYAADKASSDAALLKIHEITAEAEVDKLYKGKVVRLAEFGAFVNILPGKDGLVHISQIAEERIRAVTDFLSEGQEVIVKVLDVDARGRIKLSMKDVTEEEKAAYTE.

Mg(2+) is bound by residues Asp486 and Asp492. Residues 553 to 612 form the KH domain; the sequence is PSMATIKIDPEKIRDVIGKGGATIRSITEQTGASIDLDDDGTVRIYAADKASSDAALLKI. The 69-residue stretch at 622-690 folds into the S1 motif domain; that stretch reads DKLYKGKVVR…ARGRIKLSMK (69 aa).

This sequence belongs to the polyribonucleotide nucleotidyltransferase family. In terms of assembly, component of the RNA degradosome, which is a multiprotein complex involved in RNA processing and mRNA degradation. The cofactor is Mg(2+).

The protein resides in the cytoplasm. It catalyses the reaction RNA(n+1) + phosphate = RNA(n) + a ribonucleoside 5'-diphosphate. Functionally, involved in mRNA degradation. Catalyzes the phosphorolysis of single-stranded polyribonucleotides processively in the 3'- to 5'-direction. The protein is Polyribonucleotide nucleotidyltransferase of Marinomonas sp. (strain MWYL1).